A 228-amino-acid chain; its full sequence is PKHD-type hydroxylase XAC2942 (228 aa).

The Fe2OG dioxygenase domain occupies 78–180 (RIYPPLFNRY…RVACFFWAQS (103 aa)). Positions 96, 98, and 161 each coordinate Fe cation. Arg171 lines the 2-oxoglutarate pocket.

It depends on Fe(2+) as a cofactor. The cofactor is L-ascorbate.

The polypeptide is PKHD-type hydroxylase XAC2942 (Xanthomonas axonopodis pv. citri (strain 306)).